Reading from the N-terminus, the 111-residue chain is Putative single-stranded DNA-binding protein ycf41 (111 aa).

The SSB domain occupies 1-98; sequence MNSCTLLVQI…FSTSRIFKYK (98 aa).

The protein resides in the plastid. The protein localises to the chloroplast. In Pyropia yezoensis (Susabi-nori), this protein is Putative single-stranded DNA-binding protein ycf41 (ycf41).